The following is a 336-amino-acid chain: Holliday junction branch migration complex subunit RuvB (336 aa).

Residues 4 to 184 (ADRLISAASN…FGIVQRLEFY (181 aa)) form a large ATPase domain (RuvB-L) region. ATP contacts are provided by residues I23, R24, G65, K68, T69, T70, 131 to 133 (EDY), R174, Y184, and R221. Residue T69 participates in Mg(2+) binding. Residues 185–255 (QVPDLQYIVG…VAAQALDMLN (71 aa)) form a small ATPAse domain (RuvB-S) region. The segment at 258-336 (AEGFDYMDRK…HFGITPPEMP (79 aa)) is head domain (RuvB-H). DNA-binding residues include R294, R313, and R318.

Belongs to the RuvB family. As to quaternary structure, homohexamer. Forms an RuvA(8)-RuvB(12)-Holliday junction (HJ) complex. HJ DNA is sandwiched between 2 RuvA tetramers; dsDNA enters through RuvA and exits via RuvB. An RuvB hexamer assembles on each DNA strand where it exits the tetramer. Each RuvB hexamer is contacted by two RuvA subunits (via domain III) on 2 adjacent RuvB subunits; this complex drives branch migration. In the full resolvosome a probable DNA-RuvA(4)-RuvB(12)-RuvC(2) complex forms which resolves the HJ.

The protein resides in the cytoplasm. It catalyses the reaction ATP + H2O = ADP + phosphate + H(+). In terms of biological role, the RuvA-RuvB-RuvC complex processes Holliday junction (HJ) DNA during genetic recombination and DNA repair, while the RuvA-RuvB complex plays an important role in the rescue of blocked DNA replication forks via replication fork reversal (RFR). RuvA specifically binds to HJ cruciform DNA, conferring on it an open structure. The RuvB hexamer acts as an ATP-dependent pump, pulling dsDNA into and through the RuvAB complex. RuvB forms 2 homohexamers on either side of HJ DNA bound by 1 or 2 RuvA tetramers; 4 subunits per hexamer contact DNA at a time. Coordinated motions by a converter formed by DNA-disengaged RuvB subunits stimulates ATP hydrolysis and nucleotide exchange. Immobilization of the converter enables RuvB to convert the ATP-contained energy into a lever motion, pulling 2 nucleotides of DNA out of the RuvA tetramer per ATP hydrolyzed, thus driving DNA branch migration. The RuvB motors rotate together with the DNA substrate, which together with the progressing nucleotide cycle form the mechanistic basis for DNA recombination by continuous HJ branch migration. Branch migration allows RuvC to scan DNA until it finds its consensus sequence, where it cleaves and resolves cruciform DNA. This is Holliday junction branch migration complex subunit RuvB from Enterobacter sp. (strain 638).